The following is a 487-amino-acid chain: MERSGQRVTTWDCDQGKHSDSDYREDGMDLGSDAGSSSSSSRASSQSNSTKVTPCSECKSSSSPGGSLDLVSALEDYEEPFPVYQKKVIDEWAPEEDGEEEEEEDERDQRGYRDDRSPAREPGDVSARTRSGGGGGRSATTAMPPPVPNGNLHQHDPQDLRHNGNVVVAGRPSCSRGPRRAIQKPQPAGGRRSGRGPAAGGLCLQPPDGGTCVPEEPPVPPMDWEALEKHLAGLQFREQEVRNQGQARTNSTSAQKNERESIRQKLALGSFFDDGPGIYTSCSKSGKPSLSSRLQSGMNLQICFVNDSGSDKDSDADDSKTETSLDTPLSPMSKQSSSYSDRDTTEEESESLDDMDFLTRQKKLQAEAKMALAMAKPMAKMQVEVEKQNRKKSPVADLLPHMPHISECLMKRSLKPTDLRDMTIGQLQVIVNDLHSQIESLNEELVQLLLIRDELHTEQDAMLVDIEDLTRHAESQQKHMAEKMPAK.

4 disordered regions span residues 1–74 (MERS…VSAL), 88–221 (VIDE…PVPP), 236–260 (FREQEVRNQGQARTNSTSAQKNERE), and 308–354 (SGSD…SLDD). Over residues 14 to 27 (DQGKHSDSDYREDG) the composition is skewed to basic and acidic residues. A compositionally biased stretch (low complexity) spans 32–67 (SDAGSSSSSSRASSQSNSTKVTPCSECKSSSSPGGS). Residues 92–106 (WAPEEDGEEEEEEDE) are compositionally biased toward acidic residues. Basic and acidic residues-rich tracts occupy residues 107–123 (RDQRGYRDDRSPAREPG) and 153–162 (HQHDPQDLRH). The residue at position 117 (Ser117) is a Phosphoserine. The span at 242–255 (RNQGQARTNSTSAQ) shows a compositional bias: polar residues. The segment covering 309–323 (GSDKDSDADDSKTET) has biased composition (basic and acidic residues). Residues 324–335 (SLDTPLSPMSKQ) are compositionally biased toward polar residues. Over residues 344-354 (TTEEESESLDD) the composition is skewed to acidic residues. A coiled-coil region spans residues 424–458 (IGQLQVIVNDLHSQIESLNEELVQLLLIRDELHTE).

This sequence belongs to the SCHIP1 family. Homooligomer (via coiled coil domain). Interacts with NF2; the interaction is direct. Interacts with ANK3. As to expression, preferentially expressed in brain, skeletal muscles and heart. Also expressed in detected in pancreas, kidney, liver, lung, and placenta.

The protein resides in the cytoplasm. The chain is Schwannomin-interacting protein 1 from Homo sapiens (Human).